Consider the following 475-residue polypeptide: UDP-N-acetylmuramate--L-alanine ligase (475 aa).

114–120 lines the ATP pocket; it reads GTHGKTT.

It belongs to the MurCDEF family.

It is found in the cytoplasm. It catalyses the reaction UDP-N-acetyl-alpha-D-muramate + L-alanine + ATP = UDP-N-acetyl-alpha-D-muramoyl-L-alanine + ADP + phosphate + H(+). It participates in cell wall biogenesis; peptidoglycan biosynthesis. In terms of biological role, cell wall formation. This Bartonella bacilliformis (strain ATCC 35685 / KC583 / Herrer 020/F12,63) protein is UDP-N-acetylmuramate--L-alanine ligase.